A 191-amino-acid polypeptide reads, in one-letter code: Putative glutathione-dependent formaldehyde-activating enzyme (191 aa).

Positions 20–166 (FAGGNLYCKC…FKAVGLETYD (147 aa)) constitute a CENP-V/GFA domain. C27, C29, C48, C50, C53, C95, and C98 together coordinate Zn(2+).

It belongs to the Gfa family. It depends on Zn(2+) as a cofactor.

The enzyme catalyses S-(hydroxymethyl)glutathione = glutathione + formaldehyde. The protein operates within one-carbon metabolism; formaldehyde degradation; formate from formaldehyde (glutathione route): step 1/3. Functionally, catalyzes the condensation of formaldehyde and glutathione to S-hydroxymethylglutathione. This chain is Putative glutathione-dependent formaldehyde-activating enzyme, found in Aspergillus terreus (strain NIH 2624 / FGSC A1156).